Here is a 625-residue protein sequence, read N- to C-terminus: 1-deoxy-D-xylulose-5-phosphate synthase (625 aa).

Thiamine diphosphate contacts are provided by residues H80 and 121-123; that span reads GHS. Residue D152 coordinates Mg(2+). Thiamine diphosphate is bound by residues 153 to 154, N181, Y290, and E371; that span reads GA. N181 is a binding site for Mg(2+).

It belongs to the transketolase family. DXPS subfamily. In terms of assembly, homodimer. Mg(2+) is required as a cofactor. It depends on thiamine diphosphate as a cofactor.

It catalyses the reaction D-glyceraldehyde 3-phosphate + pyruvate + H(+) = 1-deoxy-D-xylulose 5-phosphate + CO2. The protein operates within metabolic intermediate biosynthesis; 1-deoxy-D-xylulose 5-phosphate biosynthesis; 1-deoxy-D-xylulose 5-phosphate from D-glyceraldehyde 3-phosphate and pyruvate: step 1/1. In terms of biological role, catalyzes the acyloin condensation reaction between C atoms 2 and 3 of pyruvate and glyceraldehyde 3-phosphate to yield 1-deoxy-D-xylulose-5-phosphate (DXP). The sequence is that of 1-deoxy-D-xylulose-5-phosphate synthase from Haemophilus influenzae (strain ATCC 51907 / DSM 11121 / KW20 / Rd).